We begin with the raw amino-acid sequence, 746 residues long: MTHELSSTPQIDLLNDILKNSVESNVFSDYQKKQIVTLILKSKISTAIVLLSPKSTAASEWNYLCNLQDLHECVLCVDTILPANLQTIAKRIFSLVLLPPLNDWCKQLRDAFLRFVSQPSICPTDFPLKLFFLSTVGIELLIVNEKIIPQKTQKYLLYELFSSPSSITANEIARLCQEANNRNYLLQSLTSATDARRAFLNNPNYRLLSAIIFQDGPSNLAFVLAKDCVLLARQPETIPVSFERMSSLLLMCLPSHPDFISPEFCHEWTELAERNGLQEEWLNILNTACNFKECRAIIHKECSEFIKDNHTSRVAILISMKLAFQYQLSQVIPTLKLLLQSKVYDSVLLEALRQSSTLGPVKQLIADDSCLLNNLSKLLLDTNISPLDASSIATIIYNMCKFKITKSEHERELNQLRNMAEASKTIDYKEDETAPTERRIQKILEYDILSKLFSAAKHYNSLNGLLAMILVHMANYKLARRKLVQIGALKFLTRQCFIQTQDSNAAFALAKILISVAPHSIFTKAFPSNRAIHPMSKLLSTNSADTEYPILLGKFEVLLALTNLASHDEESRQAIVQECWRELDELIIETNPLIQRATTELINNLSLSPYCLIKFIGDKDSDFENTRLHIVLALSDTEDTPTRLAACGILVQITSVDEGCKKILSLQNDFNYIVRMLTDQDEGIQHRGLVCICNIVYSKDQEIFNKFIKTPKAVETLRTYITKQAALKELQHEALVMIDSRLQGSK.

The protein localises to the cytoplasm. Its function is as follows. Essential for actinomyosin ring assembly during cytokinesis. Has a role, in conjunction with F-actin, in assembling myosin II-containing proteins, such as myo2, at the division site. The sequence is that of Ring assembly protein 3 (rng3) from Schizosaccharomyces pombe (strain 972 / ATCC 24843) (Fission yeast).